A 361-amino-acid chain; its full sequence is Teichoic acids export ATP-binding protein TagH (361 aa).

One can recognise an ABC transporter domain in the interval 13–246 (TKEYDLYKSQ…YREFTKWFKG (234 aa)). Position 60-67 (60-67 (GVNGSGKS)) interacts with ATP. The segment at 247 to 361 (QSKKEKKHFQ…HDTNATSGVK (115 aa)) is unknown.

It belongs to the ABC transporter superfamily. Teichoic acids exporter (TC 3.A.1.104.1) family. In terms of assembly, the complex is composed of two ATP-binding proteins (TagH) and two transmembrane proteins (TagG).

It is found in the cell membrane. The enzyme catalyses ATP + H2O + teichoic acidSide 1 = ADP + phosphate + teichoic acidSide 2.. Its function is as follows. Part of the ABC transporter complex TagGH involved in teichoic acids export. Responsible for energy coupling to the transport system. The protein is Teichoic acids export ATP-binding protein TagH of Levilactobacillus brevis (strain ATCC 367 / BCRC 12310 / CIP 105137 / JCM 1170 / LMG 11437 / NCIMB 947 / NCTC 947) (Lactobacillus brevis).